A 364-amino-acid polypeptide reads, in one-letter code: tRNA N6-adenosine threonylcarbamoyltransferase (364 aa).

Positions 118 and 122 each coordinate Fe cation. Substrate is bound by residues 140 to 144 (LVSGG), Asp173, Gly186, and Asn288. Asp316 contributes to the Fe cation binding site.

It belongs to the KAE1 / TsaD family. It depends on Fe(2+) as a cofactor.

The protein resides in the cytoplasm. It catalyses the reaction L-threonylcarbamoyladenylate + adenosine(37) in tRNA = N(6)-L-threonylcarbamoyladenosine(37) in tRNA + AMP + H(+). Functionally, required for the formation of a threonylcarbamoyl group on adenosine at position 37 (t(6)A37) in tRNAs that read codons beginning with adenine. Is involved in the transfer of the threonylcarbamoyl moiety of threonylcarbamoyl-AMP (TC-AMP) to the N6 group of A37, together with TsaE and TsaB. TsaD likely plays a direct catalytic role in this reaction. This is tRNA N6-adenosine threonylcarbamoyltransferase from Cereibacter sphaeroides (strain ATCC 17023 / DSM 158 / JCM 6121 / CCUG 31486 / LMG 2827 / NBRC 12203 / NCIMB 8253 / ATH 2.4.1.) (Rhodobacter sphaeroides).